The sequence spans 197 residues: CASP-like protein 0U1 (197 aa).

Topologically, residues 1 to 13 (MDDFDPTVTNSPK) are cytoplasmic. Residues 14–34 (FRLIAVQCLFSITAFAAMLSQ) traverse the membrane as a helical segment. Over 35–63 (RHGLAGPDEMTLEECGPQACGYQKFSNFK) the chain is Extracellular. Residues 64–84 (FLIAVCIIYAVFSLVVMAAYL) form a helical membrane-spanning segment. At 85–99 (LQRVPPPVTELTAYT) the chain is on the cytoplasmic side. A helical membrane pass occupies residues 100-120 (VMNVLLFAAFAMSATSCNITI). Topologically, residues 121–135 (VDPVYPVCKRATSAK) are extracellular. Residues 136-156 (ASIAFAFFTWLAVCFSMLFTY) form a helical membrane-spanning segment. Residues 157–197 (KEWRDVDYHVPGSGAYEFVPGVTSGSSRSSYPPQASSSSYA) are Cytoplasmic-facing. Residues 178–197 (VTSGSSRSSYPPQASSSSYA) are disordered. Residues 180 to 197 (SGSSRSSYPPQASSSSYA) are compositionally biased toward low complexity.

The protein belongs to the Casparian strip membrane proteins (CASP) family. As to quaternary structure, homodimer and heterodimers.

The protein resides in the cell membrane. The polypeptide is CASP-like protein 0U1 (Micromonas commoda (strain RCC299 / NOUM17 / CCMP2709) (Picoplanktonic green alga)).